The primary structure comprises 304 residues: CD-NTase-associated protein 6 (304 aa).

75-80 contributes to the ATP binding site; that stretch reads GTGKTS.

It belongs to the AAA ATPase family. As to quaternary structure, oligomerizes. Homohexamer. Forms a 1:1:6 CdnD:Cap7:Cap6 complex.

Regulates complex assembly in a CBASS antivirus system. CBASS (cyclic oligonucleotide-based antiphage signaling system) provides immunity against bacteriophage. The CD-NTase protein synthesizes cyclic nucleotides in response to infection; these serve as specific second messenger signals. The signals activate a diverse range of effectors, leading to bacterial cell death and thus abortive phage infection. A type III-C(AAA) CBASS system. Functionally, prevents the CdnD:Cap7:Cap8 complex (also called CdnD:HORMA2:HORMA3) from synthesizing 2',3',3'-cyclic AMP-AMP-AMP (cAAA). Binds and disassembles an active CdnD:Cap7:Cap8 complex, inhibiting the complex's ability to synthesize cyclic nucleotide second messengers. An AAA+-ATPase remodeler, in the absence of foreign threat Cap6 probably maintains the Cap7 protein in an open, inactive state. Once activated (presumably by a bacteriophage protein) Cap7 binds to and activates its cognate CD-NTase (CdnD in this bacteria) to synthesize cAAA, a cyclic nucleotide second messenger. cAAA activates the NucC endonuclease which degrades all DNA in the infected cell, causing cell death and abortive phage infection. In Pseudomonas aeruginosa, this protein is CD-NTase-associated protein 6.